The chain runs to 176 residues: Disulfide bond formation protein B (176 aa).

The Cytoplasmic segment spans residues M1 to Q11. The helical transmembrane segment at V12–F28 threads the bilayer. The Periplasmic segment spans residues L29–I46. An intrachain disulfide couples C38 to C41. A helical transmembrane segment spans residues G47 to P63. Topologically, residues K64–L70 are cytoplasmic. Residues L71–G88 form a helical membrane-spanning segment. The Periplasmic portion of the chain corresponds to R89 to E145. C104 and C131 form a disulfide bridge. A helical membrane pass occupies residues Q146–R164. At I165–R176 the chain is on the cytoplasmic side.

The protein belongs to the DsbB family.

It localises to the cell inner membrane. Required for disulfide bond formation in some periplasmic proteins. Acts by oxidizing the DsbA protein. This chain is Disulfide bond formation protein B, found in Psychrobacter arcticus (strain DSM 17307 / VKM B-2377 / 273-4).